A 353-amino-acid polypeptide reads, in one-letter code: Mitochondrial import inner membrane translocase subunit TIM50 (353 aa).

The transit peptide at 1 to 21 directs the protein to the mitochondrion; sequence MAASAALFSRLRSGLRVGARG. The Mitochondrial matrix segment spans residues 22-65; sequence LCTRLAPPPPRTPEQVTEIANRGGSKAQGPQHQPGSEGPSYAKK. Residues 24–59 are disordered; it reads TRLAPPPPRTPEQVTEIANRGGSKAQGPQHQPGSEG. Residues 66 to 86 form a helical membrane-spanning segment; that stretch reads IALWIAGLLGAGGTVSIVYIF. Residues 87–353 lie on the Mitochondrial intermembrane side of the membrane; the sequence is GNNPVDENGT…SRLWPRSKQP (267 aa). Residues 143–286 enclose the FCP1 homology domain; that stretch reads YYQPPYTLVL…LDLSAFLKTI (144 aa). Serine 341 is subject to Phosphoserine.

It belongs to the TIM50 family. As to quaternary structure, component of the TIM23 complex at least composed of TIMM23, TIMM17 (TIMM17A or TIMM17B) and TIMM50; within this complex, directly interacts with TIMM23. The complex interacts with the TIMM44 component of the PAM complex and with DNAJC15.

It localises to the mitochondrion inner membrane. Functionally, essential component of the TIM23 complex, a complex that mediates the translocation of transit peptide-containing proteins across the mitochondrial inner membrane. Has some phosphatase activity in vitro; however such activity may not be relevant in vivo. The sequence is that of Mitochondrial import inner membrane translocase subunit TIM50 (Timm50) from Mus musculus (Mouse).